The following is a 114-amino-acid chain: Ribonuclease P protein component (114 aa).

The protein belongs to the RnpA family. As to quaternary structure, consists of a catalytic RNA component (M1 or rnpB) and a protein subunit.

It catalyses the reaction Endonucleolytic cleavage of RNA, removing 5'-extranucleotides from tRNA precursor.. Functionally, RNaseP catalyzes the removal of the 5'-leader sequence from pre-tRNA to produce the mature 5'-terminus. It can also cleave other RNA substrates such as 4.5S RNA. The protein component plays an auxiliary but essential role in vivo by binding to the 5'-leader sequence and broadening the substrate specificity of the ribozyme. The polypeptide is Ribonuclease P protein component (Legionella pneumophila (strain Lens)).